The chain runs to 859 residues: Envelope glycoprotein (859 aa).

The propeptide occupies 1-6 (MVSIAF). The Extracellular segment spans residues 7–614 (YGGIPGGIST…KDLWSHIGNW (608 aa)). Residues Asn-40, Asn-112, Asn-141, Asn-148, Asn-184, Asn-201, Asn-214, Asn-233, Asn-244, Asn-282, Asn-313, Asn-340, Asn-346, Asn-368, Asn-399, Asn-406, Asn-411, and Asn-422 are each glycosylated (N-linked (GlcNAc...) asparagine; by host). A fusion peptide region spans residues 446–466 (FGISAIVAAIVAATAIAASAT). Residues Asn-483 and Asn-490 are each glycosylated (N-linked (GlcNAc...) asparagine; by host). The tract at residues 498 to 513 (LIERQIKILYAMILQT) is immunosuppression. N-linked (GlcNAc...) asparagine; by host glycosylation is found at Asn-550 and Asn-557. 2 coiled-coil regions span residues 576–624 (ILTI…SIIK) and 663–699 (KKFYHKHASREDTWDQAQHNIHLAGVTGGSGDKYCKQ). Residues 615 to 635 (IPGLGASIIKYIVMFLLIYLL) traverse the membrane as a helical segment. Over 636–859 (LTSSPKILRA…TSHVSMPQYV (224 aa)) the chain is Cytoplasmic.

In terms of assembly, the mature envelope protein (Env) consists of a trimer of SU-TM heterodimers attached by noncovalent interactions or by a labile interchain disulfide bond. Specific enzymatic cleavages in vivo yield mature proteins. Envelope glycoproteins are synthesized as an inactive precursor that is N-glycosylated and processed likely by host cell furin or by a furin-like protease in the Golgi to yield the mature SU and TM proteins. The cleavage site between SU and TM requires the minimal sequence [KR]-X-[KR]-R.

The protein resides in the virion membrane. It is found in the host cell membrane. The surface protein (SU) attaches the virus to the host cell by binding to its receptor. This interaction triggers the refolding of the transmembrane protein (TM) and is thought to activate its fusogenic potential by unmasking its fusion peptide. Fusion occurs at the host cell plasma membrane. Functionally, the transmembrane protein (TM) acts as a class I viral fusion protein. Under the current model, the protein has at least 3 conformational states: pre-fusion native state, pre-hairpin intermediate state, and post-fusion hairpin state. During viral and target cell membrane fusion, the coiled coil regions (heptad repeats) assume a trimer-of-hairpins structure, positioning the fusion peptide in close proximity to the C-terminal region of the ectodomain. The formation of this structure appears to drive apposition and subsequent fusion of viral and target cell membranes. Membranes fusion leads to delivery of the nucleocapsid into the cytoplasm. The sequence is that of Envelope glycoprotein (env) from Equus asinus (Donkey).